The following is a 534-amino-acid chain: Cytochrome P450 monooxygenase btcB (534 aa).

A glycan (N-linked (GlcNAc...) asparagine) is linked at Asn-20. A helical membrane pass occupies residues 41-61 (ALAFLCGALLFGFVYSVFYNL). N-linked (GlcNAc...) asparagine glycosylation is found at Asn-335, Asn-413, and Asn-431. Cys-484 is a binding site for heme.

Belongs to the cytochrome P450 family. Requires heme as cofactor.

The protein resides in the membrane. It participates in secondary metabolite biosynthesis; terpenoid biosynthesis. Cytochrome P4590 monooxygenase part of the gene cluster that mediates the biosynthesis of betaestacins. The bifunctional terpene synthase btcA converts isopentenyl diphosphate (IPP) and dimethylallyl diphosphate (DMAPP) into the sesterterpene betaestacin I. The C-terminal prenyltransferase (PT) domain of btcA catalyzes formation of GFPP, whereas the N-terminal terpene cyclase (TC) domain catalyzes the cyclization of GFPP into betaestacin I. The cytochrome P450 monooxygenase btcB oxidizes the C25 methyl group of betaestacin I to yield the carboxylic acid betaestacin IV via the alcohol betaestacin III. The cytochrome P450 monooxygenase btcC further catalyzes the multistep oxidation of betaestacin IV to produce several compounds, including betaestacins Va, Vb, Vc and VI. The sequence is that of Cytochrome P450 monooxygenase btcB from Colletotrichum orbiculare (strain 104-T / ATCC 96160 / CBS 514.97 / LARS 414 / MAFF 240422) (Cucumber anthracnose fungus).